A 79-amino-acid polypeptide reads, in one-letter code: D-alanyl carrier protein (79 aa).

The 77-residue stretch at methionine 1–arginine 77 folds into the Carrier domain. At serine 35 the chain carries O-(pantetheine 4'-phosphoryl)serine.

It belongs to the DltC family. Post-translationally, 4'-phosphopantetheine is transferred from CoA to a specific serine of apo-DCP.

The protein resides in the cytoplasm. The protein operates within cell wall biogenesis; lipoteichoic acid biosynthesis. Its function is as follows. Carrier protein involved in the D-alanylation of lipoteichoic acid (LTA). The loading of thioester-linked D-alanine onto DltC is catalyzed by D-alanine--D-alanyl carrier protein ligase DltA. The DltC-carried D-alanyl group is further transferred to cell membrane phosphatidylglycerol (PG) by forming an ester bond, probably catalyzed by DltD. D-alanylation of LTA plays an important role in modulating the properties of the cell wall in Gram-positive bacteria, influencing the net charge of the cell wall. The chain is D-alanyl carrier protein from Streptococcus sanguinis (strain SK36).